The following is a 60-amino-acid chain: Large ribosomal subunit protein uL30 (60 aa).

This sequence belongs to the universal ribosomal protein uL30 family. As to quaternary structure, part of the 50S ribosomal subunit.

The polypeptide is Large ribosomal subunit protein uL30 (Staphylococcus epidermidis (strain ATCC 35984 / DSM 28319 / BCRC 17069 / CCUG 31568 / BM 3577 / RP62A)).